Consider the following 148-residue polypeptide: Ubiquitin-conjugating enzyme E2-16 kDa (148 aa).

Positions 2–148 (SSSKRIAKEL…AKEWTKKYAV (147 aa)) constitute a UBC core domain. Residue S12 is modified to Phosphoserine. C86 (glycyl thioester intermediate) is an active-site residue. Residue K91 forms a Glycyl lysine isopeptide (Lys-Gly) (interchain with G-Cter in ubiquitin) linkage.

It belongs to the ubiquitin-conjugating enzyme family. As to quaternary structure, component of the RSP5-UBA1-UBC5 ubiquitin ligase complex composed of E3 RSP5, E1 UBA1 and E2 UBC5. In terms of processing, the N-terminus is blocked.

The catalysed reaction is S-ubiquitinyl-[E1 ubiquitin-activating enzyme]-L-cysteine + [E2 ubiquitin-conjugating enzyme]-L-cysteine = [E1 ubiquitin-activating enzyme]-L-cysteine + S-ubiquitinyl-[E2 ubiquitin-conjugating enzyme]-L-cysteine.. It functions in the pathway protein modification; protein ubiquitination. In terms of biological role, catalyzes the covalent attachment of ubiquitin to other proteins. Mediates the selective degradation of short-lived and abnormal proteins. The RSP5-UBA1-UBC5 ubiquitin ligase complex ubiquitinates RPO21 forming 'Lys-63'-linked polyubiquitin chains. The polypeptide is Ubiquitin-conjugating enzyme E2-16 kDa (UBC5) (Saccharomyces cerevisiae (strain ATCC 204508 / S288c) (Baker's yeast)).